We begin with the raw amino-acid sequence, 236 residues long: Ribose-5-phosphate isomerase A (236 aa).

Substrate-binding positions include 28–31 (TGST), 83–86 (DGAD), and 96–99 (KGGG). Catalysis depends on E105, which acts as the Proton acceptor. K123 serves as a coordination point for substrate.

It belongs to the ribose 5-phosphate isomerase family. As to quaternary structure, homodimer.

The catalysed reaction is aldehydo-D-ribose 5-phosphate = D-ribulose 5-phosphate. It participates in carbohydrate degradation; pentose phosphate pathway; D-ribose 5-phosphate from D-ribulose 5-phosphate (non-oxidative stage): step 1/1. In terms of biological role, catalyzes the reversible conversion of ribose-5-phosphate to ribulose 5-phosphate. The polypeptide is Ribose-5-phosphate isomerase A (Methylorubrum extorquens (strain CM4 / NCIMB 13688) (Methylobacterium extorquens)).